We begin with the raw amino-acid sequence, 150 residues long: D-aminoacyl-tRNA deacylase (150 aa).

A Gly-cisPro motif, important for rejection of L-amino acids motif is present at residues 137–138 (GP).

This sequence belongs to the DTD family. Homodimer.

The protein resides in the cytoplasm. The enzyme catalyses glycyl-tRNA(Ala) + H2O = tRNA(Ala) + glycine + H(+). The catalysed reaction is a D-aminoacyl-tRNA + H2O = a tRNA + a D-alpha-amino acid + H(+). Functionally, an aminoacyl-tRNA editing enzyme that deacylates mischarged D-aminoacyl-tRNAs. Also deacylates mischarged glycyl-tRNA(Ala), protecting cells against glycine mischarging by AlaRS. Acts via tRNA-based rather than protein-based catalysis; rejects L-amino acids rather than detecting D-amino acids in the active site. By recycling D-aminoacyl-tRNA to D-amino acids and free tRNA molecules, this enzyme counteracts the toxicity associated with the formation of D-aminoacyl-tRNA entities in vivo and helps enforce protein L-homochirality. This Heliobacterium modesticaldum (strain ATCC 51547 / Ice1) protein is D-aminoacyl-tRNA deacylase.